Reading from the N-terminus, the 1077-residue chain is ATP-dependent helicase/deoxyribonuclease subunit B (1077 aa).

This sequence belongs to the helicase family. AddB/RexB type 2 subfamily. In terms of assembly, heterodimer of AddA and RexB. It depends on Mg(2+) as a cofactor.

Its function is as follows. The heterodimer acts as both an ATP-dependent DNA helicase and an ATP-dependent, dual-direction single-stranded exonuclease. Recognizes the chi site generating a DNA molecule suitable for the initiation of homologous recombination. This subunit has 5' -&gt; 3' nuclease activity but not helicase activity. This chain is ATP-dependent helicase/deoxyribonuclease subunit B, found in Streptococcus agalactiae serotype Ia (strain ATCC 27591 / A909 / CDC SS700).